A 926-amino-acid chain; its full sequence is Isoleucine--tRNA ligase (926 aa).

The segment at 1–21 (MKMKETLQLGKTAFPMRGNLP) is disordered. A 'HIGH' region motif is present at residues 57–67 (PYANGNIHLGH). Glu552 is an L-isoleucyl-5'-AMP binding site. Positions 593–597 (KMSKS) match the 'KMSKS' region motif. Residue Lys596 participates in ATP binding. Zn(2+)-binding residues include Cys886, Cys889, Cys906, and Cys909.

The protein belongs to the class-I aminoacyl-tRNA synthetase family. IleS type 1 subfamily. Monomer. It depends on Zn(2+) as a cofactor.

It is found in the cytoplasm. The enzyme catalyses tRNA(Ile) + L-isoleucine + ATP = L-isoleucyl-tRNA(Ile) + AMP + diphosphate. Its function is as follows. Catalyzes the attachment of isoleucine to tRNA(Ile). As IleRS can inadvertently accommodate and process structurally similar amino acids such as valine, to avoid such errors it has two additional distinct tRNA(Ile)-dependent editing activities. One activity is designated as 'pretransfer' editing and involves the hydrolysis of activated Val-AMP. The other activity is designated 'posttransfer' editing and involves deacylation of mischarged Val-tRNA(Ile). The protein is Isoleucine--tRNA ligase of Enterococcus faecalis (strain ATCC 700802 / V583).